Consider the following 284-residue polypeptide: Anaerobic dimethyl sulfoxide reductase chain YnfH (284 aa).

The Periplasmic portion of the chain corresponds to 1 to 9; the sequence is MGNGWHEWP. A helical membrane pass occupies residues 10 to 30; that stretch reads LVIFTVLGQCVVGALIVSGIG. The Cytoplasmic portion of the chain corresponds to 31–45; the sequence is WFAAKNDADRQRIVR. A helical membrane pass occupies residues 46–66; it reads GMFFLWLLMGVGFIASVMHLG. Residues 67–86 lie on the Periplasmic side of the membrane; sequence SPLRAFNSLNRIGASGLSNE. The helical transmembrane segment at 87–107 threads the bilayer; that stretch reads IAAGSIFFAVGGLWWLVAVIG. Residues 108-115 are Cytoplasmic-facing; it reads KMPQALGK. Residues 116 to 136 traverse the membrane as a helical segment; it reads LWLLFSMALGVIFVWMMTCVY. The Periplasmic segment spans residues 137–148; sequence QIDTVPTWHNGY. The helical transmembrane segment at 149 to 169 threads the bilayer; that stretch reads TTLAFFLTVLLSGPILAAAIL. The Cytoplasmic portion of the chain corresponds to 170–180; it reads RAARVTFNTTP. The helical transmembrane segment at 181–201 threads the bilayer; sequence FAIISVLALIACAGVIVLQGL. Residues 202–222 are Periplasmic-facing; sequence SLASIHSSVQQASALVPDYAS. A helical transmembrane segment spans residues 223-243; that stretch reads LQVWRVVLLCAGLGCWLCPLI. Residues 244-250 are Cytoplasmic-facing; sequence RRREPHV. Residues 251 to 271 traverse the membrane as a helical segment; the sequence is AGLILGLILILGGEMIGRVLF. Topologically, residues 272–284 are periplasmic; sequence YGLHMTVGMAIAG.

It belongs to the DmsC family. As to quaternary structure, the complex consists of three subunits: YnfF, the reductase; YnfG, an electron transfer protein, and YnfH, a membrane anchor protein.

It is found in the cell inner membrane. Its function is as follows. Terminal reductase during anaerobic growth on various sulfoxide and N-oxide compounds. The C subunit anchors the other two subunits to the membrane and stabilize the catalytic subunits. The sequence is that of Anaerobic dimethyl sulfoxide reductase chain YnfH (ynfH) from Escherichia coli (strain K12).